We begin with the raw amino-acid sequence, 412 residues long: Serine hydroxymethyltransferase (412 aa).

(6S)-5,6,7,8-tetrahydrofolate contacts are provided by residues Leu120 and Gly124–Leu126. Position 228 is an N6-(pyridoxal phosphate)lysine (Lys228). Ser353–Phe355 is a binding site for (6S)-5,6,7,8-tetrahydrofolate.

Belongs to the SHMT family. In terms of assembly, homodimer. The cofactor is pyridoxal 5'-phosphate.

It is found in the cytoplasm. The catalysed reaction is (6R)-5,10-methylene-5,6,7,8-tetrahydrofolate + glycine + H2O = (6S)-5,6,7,8-tetrahydrofolate + L-serine. It participates in one-carbon metabolism; tetrahydrofolate interconversion. The protein operates within amino-acid biosynthesis; glycine biosynthesis; glycine from L-serine: step 1/1. In terms of biological role, catalyzes the reversible interconversion of serine and glycine with tetrahydrofolate (THF) serving as the one-carbon carrier. This reaction serves as the major source of one-carbon groups required for the biosynthesis of purines, thymidylate, methionine, and other important biomolecules. Also exhibits THF-independent aldolase activity toward beta-hydroxyamino acids, producing glycine and aldehydes, via a retro-aldol mechanism. The chain is Serine hydroxymethyltransferase from Lachnoclostridium phytofermentans (strain ATCC 700394 / DSM 18823 / ISDg) (Clostridium phytofermentans).